Reading from the N-terminus, the 178-residue chain is ATP synthase subunit delta (178 aa).

The protein belongs to the ATPase delta chain family. As to quaternary structure, F-type ATPases have 2 components, F(1) - the catalytic core - and F(0) - the membrane proton channel. F(1) has five subunits: alpha(3), beta(3), gamma(1), delta(1), epsilon(1). F(0) has three main subunits: a(1), b(2) and c(10-14). The alpha and beta chains form an alternating ring which encloses part of the gamma chain. F(1) is attached to F(0) by a central stalk formed by the gamma and epsilon chains, while a peripheral stalk is formed by the delta and b chains.

It is found in the cell inner membrane. Functionally, f(1)F(0) ATP synthase produces ATP from ADP in the presence of a proton or sodium gradient. F-type ATPases consist of two structural domains, F(1) containing the extramembraneous catalytic core and F(0) containing the membrane proton channel, linked together by a central stalk and a peripheral stalk. During catalysis, ATP synthesis in the catalytic domain of F(1) is coupled via a rotary mechanism of the central stalk subunits to proton translocation. This protein is part of the stalk that links CF(0) to CF(1). It either transmits conformational changes from CF(0) to CF(1) or is implicated in proton conduction. This is ATP synthase subunit delta from Pseudomonas fluorescens (strain Pf0-1).